A 261-amino-acid chain; its full sequence is Carbonic anhydrase 1 (261 aa).

Residue Ala-2 is modified to N-acetylalanine. Residues 4–261 (SDWGYDSPNG…LKGRTVRAFF (258 aa)) form the Alpha-carbonic anhydrase domain. His-65 serves as the catalytic Proton donor/acceptor. Residues His-95, His-97, and His-120 each coordinate Zn(2+). Substrate contacts are provided by residues Thr-200 and 200–201 (TH).

Belongs to the alpha-carbonic anhydrase family. The cofactor is Zn(2+).

It is found in the cytoplasm. The enzyme catalyses hydrogencarbonate + H(+) = CO2 + H2O. It carries out the reaction urea = cyanamide + H2O. With respect to regulation, inhibited by acetazolamide. In terms of biological role, catalyzes the reversible hydration of carbon dioxide. Can hydrate cyanamide to urea. The chain is Carbonic anhydrase 1 (CA1) from Equus caballus (Horse).